A 541-amino-acid polypeptide reads, in one-letter code: Chaperonin GroEL (541 aa).

Residues threonine 29 to proline 32, aspartate 86 to threonine 90, glycine 413, asparagine 476 to alanine 478, and aspartate 492 each bind ATP.

It belongs to the chaperonin (HSP60) family. As to quaternary structure, forms a cylinder of 14 subunits composed of two heptameric rings stacked back-to-back. Interacts with the co-chaperonin GroES.

It localises to the cytoplasm. The enzyme catalyses ATP + H2O + a folded polypeptide = ADP + phosphate + an unfolded polypeptide.. Together with its co-chaperonin GroES, plays an essential role in assisting protein folding. The GroEL-GroES system forms a nano-cage that allows encapsulation of the non-native substrate proteins and provides a physical environment optimized to promote and accelerate protein folding. In Streptococcus equi subsp. zooepidemicus (strain H70), this protein is Chaperonin GroEL.